A 371-amino-acid chain; its full sequence is Cytochrome b (371 aa).

Transmembrane regions (helical) follow at residues 25–45 (FGSM…FLAI), 69–90 (WIMQ…YIHI), 105–125 (WLSG…GYVL), and 170–190 (FFAL…IHIM). Residues histidine 75 and histidine 89 each coordinate heme b. Histidine 174 and histidine 188 together coordinate heme b. Histidine 193 contacts a ubiquinone. The next 4 membrane-spanning stretches (helical) occupy residues 218–238 (HKDI…MSFS), 280–300 (LGGT…PFTH), 312–332 (IMQL…WAAT), and 339–358 (FTII…IMNP).

The protein belongs to the cytochrome b family. As to quaternary structure, the cytochrome bc1 complex contains 3 respiratory subunits (MT-CYB, CYC1 and UQCRFS1), 2 core proteins (UQCRC1 and UQCRC2) and probably 6 low-molecular weight proteins. Requires heme b as cofactor.

It is found in the mitochondrion inner membrane. Component of the ubiquinol-cytochrome c reductase complex (complex III or cytochrome b-c1 complex) that is part of the mitochondrial respiratory chain. The b-c1 complex mediates electron transfer from ubiquinol to cytochrome c. Contributes to the generation of a proton gradient across the mitochondrial membrane that is then used for ATP synthesis. This is Cytochrome b (MT-CYB) from Coluber constrictor (Eastern racer).